The primary structure comprises 111 residues: Rubredoxin (111 aa).

The Rubredoxin-like domain maps to 11–62; the sequence is LDRFECRSCGYVYEPEKGDSKHDIAPETPFAELPINWRCPVCTAKKAAFSNI. Fe cation is bound by residues Cys-16, Cys-19, Cys-49, and Cys-52.

This sequence belongs to the rubredoxin family. The cofactor is Fe(3+).

In terms of biological role, rubredoxin is a small nonheme, iron protein lacking acid-labile sulfide. Its single Fe, chelated to 4 Cys, functions as an electron acceptor and may also stabilize the conformation of the molecule. Could be involved in hydrogenase-linked redox processes. The sequence is that of Rubredoxin (rub) from Trichormus variabilis (strain ATCC 29413 / PCC 7937) (Anabaena variabilis).